Here is a 266-residue protein sequence, read N- to C-terminus: Putative carbamate hydrolase RutD (266 aa).

An AB hydrolase-1 domain is found at 15-239; that stretch reads PVVVLSAGLG…RVEMPWGGHA (225 aa).

The protein belongs to the AB hydrolase superfamily. Hydrolase RutD family.

It catalyses the reaction carbamate + 2 H(+) = NH4(+) + CO2. In terms of biological role, involved in pyrimidine catabolism. May facilitate the hydrolysis of carbamate, a reaction that can also occur spontaneously. This Klebsiella variicola (strain At-22) protein is Putative carbamate hydrolase RutD.